A 206-amino-acid chain; its full sequence is MERTLVLIRHGQSEWNLKNLFTGWKDPGLTEKGRTEAIAAGKKLKETGLKFDIAYTSALQRAQKTAQNILEQMEQSDLELIKTPALNERNYGDLSGLNKDEVRQKWGEQQVQIWRRSYTIAPPNGESLRDTGARVWPYYLHHIQPHILRSQTVLIAAHGNSLRALIMALEGLNSEEIISQELATGIPIVYTFNSDSTISSKTIITP.

Residues 9–16 (RHGQSEWN), 22–23 (TG), Arg-61, 88–91 (ERNY), Lys-99, 115–116 (RR), and 159–160 (GN) contribute to the substrate site. The Tele-phosphohistidine intermediate role is filled by His-10. Glu-88 serves as the catalytic Proton donor/acceptor.

The protein belongs to the phosphoglycerate mutase family. BPG-dependent PGAM subfamily. As to quaternary structure, homodimer.

The catalysed reaction is (2R)-2-phosphoglycerate = (2R)-3-phosphoglycerate. It functions in the pathway carbohydrate degradation; glycolysis; pyruvate from D-glyceraldehyde 3-phosphate: step 3/5. Functionally, catalyzes the interconversion of 2-phosphoglycerate and 3-phosphoglycerate. In Bartonella henselae (strain ATCC 49882 / DSM 28221 / CCUG 30454 / Houston 1) (Rochalimaea henselae), this protein is 2,3-bisphosphoglycerate-dependent phosphoglycerate mutase.